We begin with the raw amino-acid sequence, 190 residues long: Protein GrpE (190 aa).

Positions 1 to 33 (MSEQEKDQNNAEPQVETVEEQQAAAAAEAVEPT) are disordered. The span at 11 to 32 (AEPQVETVEEQQAAAAAEAVEP) shows a compositional bias: low complexity.

The protein belongs to the GrpE family. In terms of assembly, homodimer.

The protein resides in the cytoplasm. In terms of biological role, participates actively in the response to hyperosmotic and heat shock by preventing the aggregation of stress-denatured proteins, in association with DnaK and GrpE. It is the nucleotide exchange factor for DnaK and may function as a thermosensor. Unfolded proteins bind initially to DnaJ; upon interaction with the DnaJ-bound protein, DnaK hydrolyzes its bound ATP, resulting in the formation of a stable complex. GrpE releases ADP from DnaK; ATP binding to DnaK triggers the release of the substrate protein, thus completing the reaction cycle. Several rounds of ATP-dependent interactions between DnaJ, DnaK and GrpE are required for fully efficient folding. The sequence is that of Protein GrpE from Alcanivorax borkumensis (strain ATCC 700651 / DSM 11573 / NCIMB 13689 / SK2).